Consider the following 328-residue polypeptide: tRNA dimethylallyltransferase (328 aa).

Position 19 to 26 (19 to 26 (GPTASGKT)) interacts with ATP. Substrate is bound at residue 21–26 (TASGKT). Interaction with substrate tRNA stretches follow at residues 50-53 (DSAL), 174-178 (QRIQR), and 257-262 (RCVGYR).

This sequence belongs to the IPP transferase family. As to quaternary structure, monomer. Mg(2+) is required as a cofactor.

The enzyme catalyses adenosine(37) in tRNA + dimethylallyl diphosphate = N(6)-dimethylallyladenosine(37) in tRNA + diphosphate. Functionally, catalyzes the transfer of a dimethylallyl group onto the adenine at position 37 in tRNAs that read codons beginning with uridine, leading to the formation of N6-(dimethylallyl)adenosine (i(6)A). This is tRNA dimethylallyltransferase from Leptothrix cholodnii (strain ATCC 51168 / LMG 8142 / SP-6) (Leptothrix discophora (strain SP-6)).